The primary structure comprises 108 residues: Nucleoid-associated protein BTH_I2220 (108 aa).

It belongs to the YbaB/EbfC family. In terms of assembly, homodimer.

It localises to the cytoplasm. The protein localises to the nucleoid. Functionally, binds to DNA and alters its conformation. May be involved in regulation of gene expression, nucleoid organization and DNA protection. This Burkholderia thailandensis (strain ATCC 700388 / DSM 13276 / CCUG 48851 / CIP 106301 / E264) protein is Nucleoid-associated protein BTH_I2220.